The chain runs to 75 residues: Conotoxin ar11a (75 aa).

The N-terminal stretch at 1-19 (MKLCATFLLVLVTLPLVTG) is a signal peptide. Positions 20-36 (EKSSERSLSGAILRGVR) are excised as a propeptide. 4 disulfides stabilise this stretch: Cys-39–Cys-53, Cys-46–Cys-58, Cys-52–Cys-63, and Cys-57–Cys-70.

As to expression, expressed by the venom duct.

The protein localises to the secreted. Both natural (L-Leu form) and synthetic (D-Leu from) peptides equally cause sensitivity to touch and body tremor. Neither L-Leu form nor D-Leu form is active on nerve-muscle preparation. The chain is Conotoxin ar11a from Conus arenatus (Sand-dusted cone).